A 247-amino-acid chain; its full sequence is MFLLLVLLVAALPVNAEGGEIIWGTESKPHSRPYMAYIRFNDSKSVYRCGGFLVARDIVMTAAHCNGKVINVTLGIHNLKKKKNTQLIPVSEAIPHESFDNETLVNDIMLLKLERKAQLNSAVDTIALPKSKDWVKPGQVCTVAGWGKLANCTLSDTLQEVNLEVQKGQKCRSMSQTYNDSIQLCVGNPSENKATGKGDSGGPFVCNGVVQGIVSCRLCTGTLPRVFTRISSFMPWIRKTMKLLQQP.

The first 19 residues, 1 to 19 (MFLLLVLLVAALPVNAEGG), serve as a signal peptide directing secretion. Position 20 (glutamate 20) is a propeptide, activation peptide. One can recognise a Peptidase S1 domain in the interval 21–242 (IIWGTESKPH…FMPWIRKTMK (222 aa)). A glycan (N-linked (GlcNAc...) asparagine) is linked at asparagine 41. The cysteines at positions 49 and 65 are disulfide-linked. Histidine 64 acts as the Charge relay system in catalysis. 2 N-linked (GlcNAc...) asparagine glycosylation sites follow: asparagine 71 and asparagine 101. Aspartate 107 serves as the catalytic Charge relay system. 2 disulfide bridges follow: cysteine 141–cysteine 206 and cysteine 171–cysteine 185. N-linked (GlcNAc...) asparagine glycans are attached at residues asparagine 151 and asparagine 179. Serine 200 (charge relay system) is an active-site residue.

The protein belongs to the peptidase S1 family. Granzyme subfamily.

It localises to the secreted. Its subcellular location is the cytoplasmic granule. The chain is Mast cell protease 8 (Mcpt8) from Mus musculus (Mouse).